Here is a 245-residue protein sequence, read N- to C-terminus: Flagellar basal-body rod protein FlgF (245 aa).

It belongs to the flagella basal body rod proteins family. In terms of assembly, the basal body constitutes a major portion of the flagellar organelle and consists of five rings (E,L,P,S, and M) mounted on a central rod. The rod consists of about 26 subunits of FlgG in the distal portion, and FlgB, FlgC and FlgF are thought to build up the proximal portion of the rod with about 6 subunits each.

The protein localises to the bacterial flagellum basal body. This chain is Flagellar basal-body rod protein FlgF (flgF), found in Caulobacter vibrioides (strain ATCC 19089 / CIP 103742 / CB 15) (Caulobacter crescentus).